Reading from the N-terminus, the 192-residue chain is Fe/S biogenesis protein NfuA (192 aa).

[4Fe-4S] cluster-binding residues include Cys150 and Cys153.

Belongs to the NfuA family. Homodimer. [4Fe-4S] cluster serves as cofactor.

Involved in iron-sulfur cluster biogenesis. Binds a 4Fe-4S cluster, can transfer this cluster to apoproteins, and thereby intervenes in the maturation of Fe/S proteins. Could also act as a scaffold/chaperone for damaged Fe/S proteins. In Vesicomyosocius okutanii subsp. Calyptogena okutanii (strain HA), this protein is Fe/S biogenesis protein NfuA.